The following is a 643-amino-acid chain: Complement component C1q receptor (643 aa).

The signal sequence occupies residues 1-23 (MVTSTGLLLLLGLLGQLWAGAAA). Topologically, residues 24-571 (DSEAVVCEGT…HSDSDTDGQK (548 aa)) are extracellular. Residues 31–173 (EGTACYTAHW…CGTPDAPGNS (143 aa)) form the C-type lectin domain. Disulfide bonds link cysteine 140/cysteine 164, cysteine 261/cysteine 272, cysteine 268/cysteine 282, cysteine 284/cysteine 297, cysteine 303/cysteine 314, cysteine 308/cysteine 325, cysteine 327/cysteine 340, cysteine 346/cysteine 355, cysteine 351/cysteine 364, cysteine 366/cysteine 380, cysteine 386/cysteine 397, cysteine 393/cysteine 406, cysteine 408/cysteine 422, cysteine 428/cysteine 437, cysteine 433/cysteine 446, and cysteine 448/cysteine 461. EGF-like domains follow at residues 257–298 (PKFG…VTCA) and 299–341 (SRNP…VHCV). Asparagine 322 carries N-linked (GlcNAc...) asparagine glycosylation. An EGF-like 3; calcium-binding domain is found at 342-381 (DIDECEDSPCDQECINTPGGFHCECWVGYQSSGSKEEACE). Residues 382-423 (DVDECTAAYSPCAQGCTNTDGSFYCSCKEGYIMSGEDSTQCE) form the EGF-like 4; calcium-binding domain. Residues 424–462 (DIDECLGNPCDTLCINTDGSFRCGCPAGFELAPNGVSCT) form the EGF-like 5; calcium-binding domain. The interval 469–517 (ELPARPPQKEDKGDGKESTVPLTEMPGSLNGSKDVSNRAQTTDLSIQSD) is disordered. Basic and acidic residues predominate over residues 475-485 (PQKEDKGDGKE). Over residues 497 to 517 (LNGSKDVSNRAQTTDLSIQSD) the composition is skewed to polar residues. Asparagine 498 carries an N-linked (GlcNAc...) asparagine glycan. A helical transmembrane segment spans residues 572-592 (LLLFYILGTVVAISLLLALAL). Residues 593–643 (GLLIYLKRKAKKEEIKEKKAQNAADSYSWIPERAESRAPENQYSPTPGTDC) lie on the Cytoplasmic side of the membrane. The tract at residues 606-643 (EIKEKKAQNAADSYSWIPERAESRAPENQYSPTPGTDC) is disordered. Position 618 is a phosphoserine (serine 618). A phosphotyrosine mark is found at tyrosine 619 and tyrosine 635. The span at 631-643 (PENQYSPTPGTDC) shows a compositional bias: polar residues.

In terms of assembly, homodimer. Interacts with C1QBP; the association may represent a cell surface C1q receptor. Interacts with surfactant protein A/SFTPA1. Interacts with multimerin-2/MMRN2. Interacts with DAG1; this interaction plays an important role in endothelial cell migration. Interacts with CBL. Interacts with IGFBP7. Interacts with VEGFR2. Post-translationally, N- and O-glycosylated. Phosphorylated on Tyr-619 and Tyr-635 by SRC; these phosphorylations promote endothelial cell adhesion and migration. Widely expressed. Highly expressed in lung and heart. Expressed at lower level in brain, thymus, liver, spleen, intestine, kidney, adrenal gland, muscle and testis. Expressed on endothelial cells, platelets, undifferentiated monocytes and circulating natural killer cells.

Its subcellular location is the cell membrane. Its function is as follows. Cell surface receptor that plays a role in various physiological processes including inflammation, phagocytosis, and cell adhesion. Plays a role in phagocytosis and enhances the uptake of apoptotic cells and immune complexes by acting as a receptor for defense collagens including surfactant protein A/SFTPA1, C1q, and mannose-binding lectin (MBL2). Plays a role in the regulation of endothelial cell function and adhesion by activating angiogenesis. Mechanistically, exerts its angiogenic function by associating with beta-dystroglycan, leading to SRC-dependent phosphorylation and subsequent recruitment of CBL. In turn, CBL provides a docking site for downstream signaling components, such as CRKL to enhance cell migration. Participates in angiogenesis also by acting as a receptor for the ECM pan-endothelial glycoprotein multimerin-2/MMRN2 and IGFBP7 ligands. Both ligands play a non-redundant role in CD93-mediated endothelial cell function. Acts as a key regulator of endothelial barrier function through modulating VEGFR2 function. The sequence is that of Complement component C1q receptor (Cd93) from Rattus norvegicus (Rat).